The primary structure comprises 209 residues: MKYTTFGIISLFLSVTWALRFELAASFEPKPFCIRDFVEAGNQVVITMESDGRVGDGQVLSFYVIDSMGNEHRRKKNFAEKLNVAFTAPSSAVFDVCFENKAEAAGRSLMRNVEVNIESGSAARDWDKIRSAEKLRPAEVQLRQVEEMSDEIVERLNYLKLREERLRDTNESTNRRVRNFSMAVIVVFAALCAWQLNYLKNYFRAKHII.

A signal peptide spans 1 to 18 (MKYTTFGIISLFLSVTWA). At 19–178 (LRFELAASFE…TNESTNRRVR (160 aa)) the chain is on the lumenal side. Positions 31 to 119 (PFCIRDFVEA…MRNVEVNIES (89 aa)) constitute a GOLD domain. A helical transmembrane segment spans residues 179–199 (NFSMAVIVVFAALCAWQLNYL). The Cytoplasmic portion of the chain corresponds to 200 to 209 (KNYFRAKHII).

This sequence belongs to the EMP24/GP25L family.

The protein resides in the endoplasmic reticulum membrane. The protein localises to the golgi apparatus membrane. Constituent of COPII-coated endoplasmic reticulum-derived transport vesicles. Required for efficient transport of a subset of secretory proteins to the Golgi. Facilitates retrograde transport from the Golgi to the endoplasmic reticulum. This is Endoplasmic reticulum vesicle protein 25 (ERV25) from Eremothecium gossypii (strain ATCC 10895 / CBS 109.51 / FGSC 9923 / NRRL Y-1056) (Yeast).